Reading from the N-terminus, the 186-residue chain is Small ribosomal subunit protein uS5 (186 aa).

The 64-residue stretch at 20–83 (FVDKLVHINR…EAAKRDMIFV (64 aa)) folds into the S5 DRBM domain.

Belongs to the universal ribosomal protein uS5 family. As to quaternary structure, part of the 30S ribosomal subunit. Contacts proteins S4 and S8.

In terms of biological role, with S4 and S12 plays an important role in translational accuracy. Functionally, located at the back of the 30S subunit body where it stabilizes the conformation of the head with respect to the body. The protein is Small ribosomal subunit protein uS5 of Brucella anthropi (strain ATCC 49188 / DSM 6882 / CCUG 24695 / JCM 21032 / LMG 3331 / NBRC 15819 / NCTC 12168 / Alc 37) (Ochrobactrum anthropi).